A 153-amino-acid polypeptide reads, in one-letter code: UPF0225 protein ETA_15740 (153 aa).

Belongs to the UPF0225 family.

This chain is UPF0225 protein ETA_15740, found in Erwinia tasmaniensis (strain DSM 17950 / CFBP 7177 / CIP 109463 / NCPPB 4357 / Et1/99).